The following is a 270-amino-acid chain: Oxidoreductase claK (270 aa).

It belongs to the avfA family.

Its pathway is pigment biosynthesis. In terms of biological role, oxidoreductase; part of the gene cluster that mediates the biosynthesis of the bianthraquinone cladofulvin, a conidial pigment not required for virulence but that plays a role in fitness and resistance to environmental stresses including UV light and low-temperature stress. The pathway begins with the synthesis of atrochrysone thioester by the polyketide synthase (PKS) claG. The atrochrysone carboxyl ACP thioesterase claF then breaks the thioester bond and releases the atrochrysone carboxylic acid from claG. This compound is decarboxylated by claH to yield emodin, which is further converted to chrysophanol hydroquinone by the reductase claC and the dehydratase claB. The cytochrome monooxygenase P450 claM then catalyzes the dimerization of nataloe-emodin to cladofulvin. This is Oxidoreductase claK from Passalora fulva (Tomato leaf mold).